Consider the following 651-residue polypeptide: ATP-dependent RNA helicase DBP6 (651 aa).

Residues 1–114 (MFAARFDPTK…ADVDDDGKHT (114 aa)) are disordered. Residues 7 to 17 (DPTKVVREEPK) show a composition bias toward basic and acidic residues. Positions 27-42 (DDVESSDSDQDIEDGV) are enriched in acidic residues. The segment covering 49-60 (KEQSGTDVTTTR) has biased composition (polar residues). A compositionally biased stretch (acidic residues) spans 69–85 (DSESESESESDSDDEMN). Residues 100 to 113 (VSSKDADVDDDGKH) show a composition bias toward basic and acidic residues. Residues 216–224 (TFPIQTAML) carry the Q motif motif. The Helicase ATP-binding domain maps to 240 to 420 (KNFTRRIGDI…DLQLYNPTLF (181 aa)). ATP is bound at residue 253–260 (ASTGSGKT). A DEAD box motif is present at residues 360–363 (DEAD). Residues 452–611 (YLLKLLEQLS…CKPISYNDSY (160 aa)) enclose the Helicase C-terminal domain.

This sequence belongs to the DEAD box helicase family. DDX51/DBP6 subfamily. In terms of assembly, associated with pre-ribosomal particles.

The protein localises to the nucleus. It is found in the nucleolus. It carries out the reaction ATP + H2O = ADP + phosphate + H(+). Functionally, ATP-binding RNA helicase involved in the biogenesis of 60S ribosomal subunits and is required for the normal formation of 25S and 5.8S rRNAs. In Candida glabrata (strain ATCC 2001 / BCRC 20586 / JCM 3761 / NBRC 0622 / NRRL Y-65 / CBS 138) (Yeast), this protein is ATP-dependent RNA helicase DBP6 (DBP6).